We begin with the raw amino-acid sequence, 837 residues long: Protein translocase subunit SecA (837 aa).

ATP is bound by residues Gln83, 101-105 (GEGKT), and Asp494.

This sequence belongs to the SecA family. As to quaternary structure, monomer and homodimer. Part of the essential Sec protein translocation apparatus which comprises SecA, SecYEG and auxiliary proteins SecDF. Other proteins may also be involved.

Its subcellular location is the cell membrane. The protein resides in the cytoplasm. It carries out the reaction ATP + H2O + cellular proteinSide 1 = ADP + phosphate + cellular proteinSide 2.. In terms of biological role, part of the Sec protein translocase complex. Interacts with the SecYEG preprotein conducting channel. Has a central role in coupling the hydrolysis of ATP to the transfer of proteins into and across the cell membrane, serving as an ATP-driven molecular motor driving the stepwise translocation of polypeptide chains across the membrane. This chain is Protein translocase subunit SecA, found in Ureaplasma parvum serovar 3 (strain ATCC 27815 / 27 / NCTC 11736).